The primary structure comprises 122 residues: MSITNEQILDAIAEMSVTQVVELISAMEEKFGVTAAAAVVAGGAAAGAAVEEQTEFNVILASAGANKVAVIKAVRGATGLGLKEAKALVDGAPAALKEGVEKAEAEALKKELEEAGATVEIK.

It belongs to the bacterial ribosomal protein bL12 family. In terms of assembly, homodimer. Part of the ribosomal stalk of the 50S ribosomal subunit. Forms a multimeric L10(L12)X complex, where L10 forms an elongated spine to which 2 to 4 L12 dimers bind in a sequential fashion. Binds GTP-bound translation factors.

Functionally, forms part of the ribosomal stalk which helps the ribosome interact with GTP-bound translation factors. Is thus essential for accurate translation. In Vibrio vulnificus (strain CMCP6), this protein is Large ribosomal subunit protein bL12.